The following is a 274-amino-acid chain: MVPNPPISLAQGDDLIIGGRRFHSRLFTGTGKYPSMEVMQQSIKRSACEMVTVAVRRVQAVAAGHAGLMEAIDWTRIWMLPNTAGCTNAEEAVRVARLGRELAKLAGQEDNTFVKLEVIPDGRHLLPDPIGTLQAAEQLVNEGFTVLPYINADPLLAKHLEDAGCATVMPLGSPIGSGQGLNNAANIALIIENASVPVVVDAGIGVPSEAAQALEMGADAVLVNSAIALARNPAAMAEAMGQAVIAGRTAFCAGRLPRREEASASSPTTGLVSS.

Lys-115 acts as the Schiff-base intermediate with DXP in catalysis. 1-deoxy-D-xylulose 5-phosphate contacts are provided by residues Gly-176, 202 to 203 (AG), and 224 to 225 (NS).

It belongs to the ThiG family. In terms of assembly, homotetramer. Forms heterodimers with either ThiH or ThiS.

The protein localises to the cytoplasm. It catalyses the reaction [ThiS sulfur-carrier protein]-C-terminal-Gly-aminoethanethioate + 2-iminoacetate + 1-deoxy-D-xylulose 5-phosphate = [ThiS sulfur-carrier protein]-C-terminal Gly-Gly + 2-[(2R,5Z)-2-carboxy-4-methylthiazol-5(2H)-ylidene]ethyl phosphate + 2 H2O + H(+). It participates in cofactor biosynthesis; thiamine diphosphate biosynthesis. Its function is as follows. Catalyzes the rearrangement of 1-deoxy-D-xylulose 5-phosphate (DXP) to produce the thiazole phosphate moiety of thiamine. Sulfur is provided by the thiocarboxylate moiety of the carrier protein ThiS. In vitro, sulfur can be provided by H(2)S. This Parasynechococcus marenigrum (strain WH8102) protein is Thiazole synthase.